Here is a 1157-residue protein sequence, read N- to C-terminus: Zinc finger protein 516 (1157 aa).

Basic and acidic residues predominate over residues 1 to 13 (MDRSREAEMELRR). A disordered region spans residues 1 to 26 (MDRSREAEMELRRGPSPPRAGRSHEV). A mediates promoter DNA-binding and activation of transcription region spans residues 1–420 (MDRSREAEME…ATRGKVAEPA (420 aa)). 7 C2H2-type zinc fingers span residues 34-56 (HSCC…MRKH), 62-84 (YKCP…IRSH), 162-185 (VPCS…HQAH), 188-211 (FKCR…ERDH), 236-258 (FPCE…MKKH), 264-286 (HGCH…MKAH), and 323-345 (EVCT…NAIH). The span at 449–458 (SQEKRKREQD) shows a compositional bias: basic and acidic residues. Disordered stretches follow at residues 449-503 (SQEK…QGKS) and 523-653 (SRVH…KGPE). Over residues 494–503 (ASATTGQGKS) the composition is skewed to polar residues. Residues 504-526 (SECFECGKIFRTYHQMVLHSRVH) form a C2H2-type 8 zinc finger. Residues 531–541 (RDRDPEGDRAA) are compositionally biased toward basic and acidic residues. The segment covering 550–561 (EGDSASQPSSPG) has biased composition (polar residues). Acidic residues predominate over residues 575–585 (EVVDDSGEEAV). Over residues 601–612 (GEVTPTALSNGD) the composition is skewed to polar residues. Lys-630 is covalently cross-linked (Glycyl lysine isopeptide (Lys-Gly) (interchain with G-Cter in SUMO2)). Positions 644–653 (SSRETTKGPE) are enriched in basic and acidic residues. Lys-669 is covalently cross-linked (Glycyl lysine isopeptide (Lys-Gly) (interchain with G-Cter in SUMO2)). The C2H2-type 9; atypical zinc-finger motif lies at 753-776 (HPCPYCTHKTYYPEVLWMHKRIWH). Disordered regions lie at residues 831–996 (TQVP…EPSV) and 1013–1040 (RGEA…AEGQ). Polar residues predominate over residues 914–928 (GSGSLSRSTTPTPSV). Glycyl lysine isopeptide (Lys-Gly) (interchain with G-Cter in SUMO2) cross-links involve residues Lys-1032 and Lys-1051. The C2H2-type 10 zinc-finger motif lies at 1092 to 1114 (FVCVECGKSFHQPSQLRAHLRAH). The disordered stretch occupies residues 1123-1157 (PRDSEVHTASTDAPKQGRDHTTPGTVPAGPLRKGI).

Belongs to the krueppel C2H2-type zinc-finger protein family. In terms of assembly, interacts with PRDM16; the interaction is direct and may play a role in the transcription of brown adipose tissue-specific genes. Interacts with PWWP2B. Interacts with HDAC1; this interaction is enhanced in the presence of PWWP2B. In terms of tissue distribution, expressed by adipocytes more specifically in brown adipose tissue compared to white adipose tissue (WAT).

The protein resides in the nucleus. Its function is as follows. Transcriptional regulator that binds to the promoter and activates the transcription of genes promoting brown adipose tissue (BAT) differentiation. Among brown adipose tissue-specific genes, binds the proximal region of the promoter of the UCP1 gene to activate its transcription and thereby regulate thermogenesis. May also play a role in the cellular response to replication stress. The sequence is that of Zinc finger protein 516 from Mus musculus (Mouse).